We begin with the raw amino-acid sequence, 494 residues long: Glycerol kinase (494 aa).

An ADP-binding site is contributed by T13. Positions 13, 14, and 15 each coordinate ATP. T13 is a binding site for sn-glycerol 3-phosphate. R17 lines the ADP pocket. Positions 83, 84, 135, and 244 each coordinate sn-glycerol 3-phosphate. 5 residues coordinate glycerol: R83, E84, Y135, D244, and Q245. Residues T266 and G309 each coordinate ADP. Residues T266, G309, Q313, and G410 each coordinate ATP. Positions 410 and 414 each coordinate ADP.

Belongs to the FGGY kinase family.

The catalysed reaction is glycerol + ATP = sn-glycerol 3-phosphate + ADP + H(+). The protein operates within polyol metabolism; glycerol degradation via glycerol kinase pathway; sn-glycerol 3-phosphate from glycerol: step 1/1. Inhibited by fructose 1,6-bisphosphate (FBP). Functionally, key enzyme in the regulation of glycerol uptake and metabolism. Catalyzes the phosphorylation of glycerol to yield sn-glycerol 3-phosphate. The chain is Glycerol kinase from Shewanella sp. (strain MR-7).